The chain runs to 444 residues: MASTNTNLQKAIDLASKAAQEDKAGNYEEALQLYQHAVQYFLHVVKYEAQGDKAKQSIRAKCTEYLDRAEKLKEYLKKKEKKPQKPVKEEQSGPVDEKGNDSDGEAESDDPEKKKLQNQLQGAIVIERPNVKWSDVAGLEGAKEALKEAVILPIKFPHLFTGKRTPWRGILLFGPPGTGKSYLAKAVATEANNSTFFSISSSDLVSKWLGESEKLVKNLFQLARENKPSIIFIDEIDSLCGSRSENESEAARRIKTEFLVQMQGVGVDNDGILVLGATNIPWVLDSAIRRRFEKRIYIPLPEAHARAAMFRLHLGSTQNSLTEADFQELGRKTDGYSGADISIIVRDALMQPVRKVQSATHFKKVRGPSRADPNCIVNDLLTPCSPGDPGAIEMTWMDVPGDKLLEPVVSMWDMLRSLSSTKPTVNEQDLLKLKKFTEDFGQEG.

An MIT domain is found at 4 to 82 (TNTNLQKAID…KEYLKKKEKK (79 aa)). Residues 19–82 (AQEDKAGNYE…KEYLKKKEKK (64 aa)) adopt a coiled-coil conformation. The segment at 77-118 (KKKEKKPQKPVKEEQSGPVDEKGNDSDGEAESDDPEKKKLQN) is disordered. Residues 86-101 (PVKEEQSGPVDEKGND) are compositionally biased toward basic and acidic residues. Residues Ser102 and Ser108 each carry the phosphoserine modification. 174 to 181 (GPPGTGKS) lines the ATP pocket. At Ser410 the chain carries Phosphoserine.

This sequence belongs to the AAA ATPase family. As to quaternary structure, proposed to be monomeric or homodimeric in nucleotide-free form and to oligomerize upon binding to ATP to form two stacked hexameric or heptameric rings with a central pore through which ESCRT-III substrates are translocated in an ATP-dependent manner. In vitro, associates on the inside of a helical tubular structure formed by a CHMP2A-CHMP3 polymer. Interacts with CHMP1A, CHMP1B, CHMP4B and CHMP6. Interacts with CHMP2A. Interacts with VPS4A; the interaction suggests a heteromeric assembly with VPS4A. Interacts with VTA1. In terms of tissue distribution, high level expression seen in the kidney. It is also expressed in the heart, brain, spleen, lung, liver, skeletal muscle, and testis.

The protein localises to the late endosome membrane. The enzyme catalyses ATP + H2O = ADP + phosphate + H(+). Its function is as follows. Involved in late steps of the endosomal multivesicular bodies (MVB) pathway. Recognizes membrane-associated ESCRT-III assemblies and catalyzes their disassembly, possibly in combination with membrane fission. Redistributes the ESCRT-III components to the cytoplasm for further rounds of MVB sorting. MVBs contain intraluminal vesicles (ILVs) that are generated by invagination and scission from the limiting membrane of the endosome and mostly are delivered to lysosomes enabling degradation of membrane proteins, such as stimulated growth factor receptors, lysosomal enzymes and lipids. VPS4A/B are required for the exosomal release of SDCBP, CD63 and syndecan. Functionally, (Microbial infection) In conjunction with the ESCRT machinery also appears to function in topologically equivalent membrane fission events, such as the terminal stages of cytokinesis and enveloped virus budding (lentiviruses). The chain is Vacuolar protein sorting-associated protein 4B from Mus musculus (Mouse).